A 253-amino-acid polypeptide reads, in one-letter code: Probable U3 small nucleolar RNA-associated protein 11 (253 aa).

The interval 1–21 (MAAAFRKAVKSRQREYRERSQ) is disordered. Residues lysine 74, lysine 83, and lysine 86 each participate in a glycyl lysine isopeptide (Lys-Gly) (interchain with G-Cter in SUMO2) cross-link. Threonine 90 carries the phosphothreonine modification. Glycyl lysine isopeptide (Lys-Gly) (interchain with G-Cter in SUMO2) cross-links involve residues lysine 103, lysine 120, lysine 143, lysine 144, lysine 180, lysine 211, lysine 218, lysine 235, and lysine 236. At serine 241 the chain carries Phosphoserine. A Glycyl lysine isopeptide (Lys-Gly) (interchain with G-Cter in SUMO2) cross-link involves residue lysine 246.

It belongs to the UTP11 family. As to quaternary structure, part of the small subunit (SSU) processome, composed of more than 70 proteins and the RNA chaperone small nucleolar RNA (snoRNA) U3.

It localises to the nucleus. The protein localises to the nucleolus. Functionally, part of the small subunit (SSU) processome, first precursor of the small eukaryotic ribosomal subunit. During the assembly of the SSU processome in the nucleolus, many ribosome biogenesis factors, an RNA chaperone and ribosomal proteins associate with the nascent pre-rRNA and work in concert to generate RNA folding, modifications, rearrangements and cleavage as well as targeted degradation of pre-ribosomal RNA by the RNA exosome. Involved in nucleolar processing of pre-18S ribosomal RNA. In Rattus norvegicus (Rat), this protein is Probable U3 small nucleolar RNA-associated protein 11.